The sequence spans 452 residues: THO complex subunit 5A (452 aa).

This sequence belongs to the THOC5 family. Component of the THO complex, which is composed of THO1, THO2, THO3, THO5, THO6 and THO7.

Its subcellular location is the nucleus. Acts as a component of the THO subcomplex of the TREX complex which is thought to couple mRNA transcription, processing and nuclear export. The sequence is that of THO complex subunit 5A (THO5A) from Arabidopsis thaliana (Mouse-ear cress).